The chain runs to 328 residues: MAVTEEEKKRNSTVEISGLRFTYPGIDGHPPPGSKPLIEDFSITLNSSDRCLLVGSNGAGKTTILKILGGKHMVEPHMVRVLGRSAFHDTGLTSSGDLCYLGGEWRRDVAFAGFEVPIQMDISAEKMIFGVAGIDPQRRDELIKVLDIDISWRLHKVSDGQRRRVQICMGLLKPFKVLLLDEITVDLDVLARADLLKFLRKECEERGATIIYATHIFDGLEDWPTHIVYVANGKLQLALPMEKVKETSKKSLMRTVESWLRKERDEERKRRKERKANGLPEFETRTEESRVTGDPARMLNNGWAAGRLHSTVAGGEDNFVLSSNRVLR.

The ABC transporter domain occupies valine 14–glutamate 257. Residue glycine 55 to threonine 62 coordinates ATP. A disordered region spans residues glutamate 263–proline 295. The span at phenylalanine 282–valine 291 shows a compositional bias: basic and acidic residues.

This sequence belongs to the ABC transporter superfamily. ABCI family.

The protein localises to the cytoplasm. The protein is ABC transporter I family member 20 (ABCI20) of Arabidopsis thaliana (Mouse-ear cress).